The following is a 338-amino-acid chain: D-erythrose-4-phosphate dehydrogenase (338 aa).

Residue 11 to 12 coordinates NAD(+); sequence RI. Substrate contacts are provided by residues 153 to 155, arginine 199, 212 to 213, and arginine 235; these read SCT and TK. Cysteine 154 (nucleophile) is an active-site residue. NAD(+) is bound at residue asparagine 317.

Belongs to the glyceraldehyde-3-phosphate dehydrogenase family. Epd subfamily. In terms of assembly, homotetramer.

Its subcellular location is the cytoplasm. It carries out the reaction D-erythrose 4-phosphate + NAD(+) + H2O = 4-phospho-D-erythronate + NADH + 2 H(+). It functions in the pathway cofactor biosynthesis; pyridoxine 5'-phosphate biosynthesis; pyridoxine 5'-phosphate from D-erythrose 4-phosphate: step 1/5. Functionally, catalyzes the NAD-dependent conversion of D-erythrose 4-phosphate to 4-phosphoerythronate. The chain is D-erythrose-4-phosphate dehydrogenase from Shewanella loihica (strain ATCC BAA-1088 / PV-4).